Reading from the N-terminus, the 286-residue chain is MAPAVQQQQSGGGGGSTGAAAVGSTTRWCPTPEQLMMLEEMYRGGLRTPNAAQIQQITAHLSTYGRIEGKNVFYWFQNHKARDRQKLRRRLCISHHLLSCAHYYHHHLAAAAAVVPPPQLLPPLHPSSSSSSCGGGLIDHANSLLSPTSATTPTSAAAAAAAAAYTTSYYYPFTAAAAPPPPRTSPAASPLFHYNQGGGGVVLPAAEAIGRSSSSSDYSLGKLVDNFGVALEETFPAQPQQPATTMAMTAVVDTTAVAAAAGGFCRPLKTLDLFPGGLKEEQHDVV.

Residues 1–25 (MAPAVQQQQSGGGGGSTGAAAVGST) are disordered. A DNA-binding region (homeobox; WUS-type) is located at residues 23–87 (GSTTRWCPTP…NHKARDRQKL (65 aa)).

This sequence belongs to the WUS homeobox family.

It is found in the nucleus. Its function is as follows. Transcription factor which may be involved in developmental processes. The chain is Putative WUSCHEL-related homeobox 2 (WOX2) from Oryza sativa subsp. japonica (Rice).